Reading from the N-terminus, the 520-residue chain is Leucine aminopeptidase 1 (520 aa).

Mn(2+)-binding residues include Lys-288 and Asp-293. Lys-300 is a catalytic residue. Asp-313, Asp-373, and Glu-375 together coordinate Mn(2+). Arg-377 is an active-site residue.

The protein belongs to the peptidase M17 family. As to quaternary structure, homohexamer (dimer of homotrimers). Mn(2+) is required as a cofactor.

It is found in the cytoplasm. It catalyses the reaction Release of an N-terminal amino acid, Xaa-|-Yaa-, in which Xaa is preferably Leu, but may be other amino acids including Pro although not Arg or Lys, and Yaa may be Pro. Amino acid amides and methyl esters are also readily hydrolyzed, but rates on arylamides are exceedingly low.. The catalysed reaction is Release of N-terminal proline from a peptide.. Functionally, presumably involved in the processing and regular turnover of intracellular proteins. Catalyzes the removal of unsubstituted N-terminal amino acids from various peptides. Possesses leucine aminopeptidase activity against the model substrate leucine-amido methyl coumarin. Possesses Cys-Gly dipeptidase activity. In addition, can cleave Cys-Leu and Leu-Cys dipeptides. Its function is as follows. Functions as a molecular chaperone to protect proteins from heat-induced damage. The chain is Leucine aminopeptidase 1 from Arabidopsis thaliana (Mouse-ear cress).